A 188-amino-acid chain; its full sequence is Cell division protein SepF (188 aa).

The segment at 29–53 is disordered; that stretch reads EQQDQDQRATQADGGALATLGDSNP.

The protein belongs to the SepF family. Homodimer. Interacts with FtsZ.

The protein resides in the cytoplasm. Cell division protein that is part of the divisome complex and is recruited early to the Z-ring. Probably stimulates Z-ring formation, perhaps through the cross-linking of FtsZ protofilaments. Its function overlaps with FtsA. The protein is Cell division protein SepF of Synechococcus sp. (strain CC9902).